The primary structure comprises 176 residues: Tubulin polymerization-promoting protein family member 3 (176 aa).

Residues threonine 126 to glutamate 152 form a disordered region. The segment covering serine 134–glutamate 152 has biased composition (basic and acidic residues).

This sequence belongs to the TPPP family.

It is found in the cytoplasm. Its subcellular location is the cytoskeleton. Functionally, regulator of microtubule dynamic that has microtubule bundling activity. The polypeptide is Tubulin polymerization-promoting protein family member 3 (tppp3) (Xenopus tropicalis (Western clawed frog)).